The following is a 132-amino-acid chain: Small ribosomal subunit protein uS8 (132 aa).

It belongs to the universal ribosomal protein uS8 family. In terms of assembly, part of the 30S ribosomal subunit. Contacts proteins S5 and S12.

Functionally, one of the primary rRNA binding proteins, it binds directly to 16S rRNA central domain where it helps coordinate assembly of the platform of the 30S subunit. This chain is Small ribosomal subunit protein uS8, found in Arthrobacter sp. (strain FB24).